The chain runs to 833 residues: 3-hydroxy-3-methylglutaryl-coenzyme A reductase (833 aa).

4 helical membrane-spanning segments follow: residues 10–32, 91–117, 160–180, and 301–321; these read FCARHQWEVIVATLALLACAASV, YLLIIAGVFSTFASFIFTSAVASLFWS, LALLGPTATLDTLLAVLLVGV, and SADYIVIATLLCALIIKFVFF. The interval 322–419 is linker; sequence EEQRNWVIDM…EEVVMLVEQS (98 aa). The disordered stretch occupies residues 347-374; sequence KPKFSVGDDSNSEVSTQTEGVLEDEWPT. Over residues 354-365 the composition is skewed to polar residues; that stretch reads DDSNSEVSTQTE. The segment at 420-833 is catalytic; it reads HIPLHRLEAV…ENITLKVPTL (414 aa). Catalysis depends on charge relay system residues Glu-504 and Lys-635. N-linked (GlcNAc...) asparagine glycosylation occurs at Asn-680. Asp-711 (charge relay system) is an active-site residue. N-linked (GlcNAc...) asparagine glycosylation is found at Asn-715 and Asn-720. The active-site Proton donor is the His-809. N-linked (GlcNAc...) asparagine glycosylation is found at Asn-813 and Asn-825.

The protein belongs to the HMG-CoA reductase family.

Its subcellular location is the endoplasmic reticulum membrane. The enzyme catalyses (R)-mevalonate + 2 NADP(+) + CoA = (3S)-3-hydroxy-3-methylglutaryl-CoA + 2 NADPH + 2 H(+). It functions in the pathway metabolic intermediate biosynthesis; (R)-mevalonate biosynthesis; (R)-mevalonate from acetyl-CoA: step 3/3. Its activity is regulated as follows. The activity of HMG-CoA-reductase is suppressed by exogenous mevalonate. Functionally, synthesis of mevalonate for the production of non-sterol isoprenoids, which are essential for growth differentiation. The sequence is that of 3-hydroxy-3-methylglutaryl-coenzyme A reductase (HMGR) from Agrotis ipsilon (Black cutworm moth).